The sequence spans 312 residues: Taste receptor type 2 member 7 (312 aa).

At 1–9 (MTYETDTTL) the chain is on the extracellular side. The helical transmembrane segment at 10–30 (MLVAVGEALVGILGNAFIALV) threads the bilayer. At 31 to 49 (NFMGWMKNRKIASIDLILS) the chain is on the cytoplasmic side. The helical transmembrane segment at 50–70 (SVAMSRICLQCIILLDCIILV) threads the bilayer. Topologically, residues 71 to 101 (QYPDTYNRGKEMRTVDFFWTLTNHLSVWFAT) are extracellular. A helical transmembrane segment spans residues 102–122 (CLSIFYLFKIANFFHPLFLWI). The Cytoplasmic portion of the chain corresponds to 123-128 (KWRIDK). Residues 129–149 (LILRTLLACVIISLCFSLPVT) form a helical membrane-spanning segment. The Extracellular segment spans residues 150–187 (ENLSDDFRRCVKTKERINSTLRCKVNKAGHASVKVNLN). Asn-151 and Asn-167 each carry an N-linked (GlcNAc...) asparagine glycan. The helical transmembrane segment at 188–208 (LVMLFPFSVSLVSFLLLILSL) threads the bilayer. Over 209–235 (WRHTRQIQLSVTGYKDPSTTAHVKAMK) the chain is Cytoplasmic. The chain crosses the membrane as a helical span at residues 236–256 (AVISFLALFVVYCLAFLIATS). Residues 257 to 266 (SYFMPESELA) lie on the Extracellular side of the membrane. A helical transmembrane segment spans residues 267–287 (VIWGELIALIYPSSHSFILIL). Residues 288–312 (GSSKLKQASVRVLCRVKTMLKGKKY) are Cytoplasmic-facing.

Belongs to the G-protein coupled receptor T2R family. In terms of tissue distribution, expressed in subsets of taste receptor cells of the tongue and palate epithelium and exclusively in gustducin-positive cells. Expressed in 15% taste bud cells in circumvallate and foliate papillae but only in 2% in fungiform papillae. Expressed in gastric and duodenal tissues.

The protein localises to the membrane. Its function is as follows. Gustducin-coupled receptor implicated in the perception of bitter compounds in the oral cavity and the gastrointestinal tract. Signals through PLCB2 and the calcium-regulated cation channel TRPM5. This is Taste receptor type 2 member 7 (Tas2r7) from Mus musculus (Mouse).